The sequence spans 920 residues: Rho guanine nucleotide exchange factor 1 (920 aa).

Residues 39–230 enclose the RGSL domain; the sequence is DQNSQFQSLE…SLYMRHLGVR (192 aa). Positions 231–404 are disordered; it reads TKSGDKKSGR…PGWRELVPPD (174 aa). A compositionally biased stretch (basic and acidic residues) spans 281 to 311; it reads DCRHLKVEADAEKPGPADRKGGLGMSSRDRT. The span at 364–380 shows a compositional bias: acidic residues; that stretch reads STEDNGETESPEPGDDG. Residues Ser-373, Gly-386, Glu-390, Ser-408, and Ser-412 each carry the phosphoserine modification. The 190-residue stretch at 415-604 folds into the DH domain; sequence KRQEVISELL…REILHHVNQA (190 aa). Phosphothreonine is present on residues Arg-432 and Thr-694. The PH domain maps to 646–759; that stretch reads KLVHEGPLTW…WCNLITETAG (114 aa). Tyr-737 bears the Phosphotyrosine; by JAK2 mark. Disordered stretches follow at residues 764 to 797 and 840 to 864; these read PAPASRLKPRPSPSSIREPLLSSSENGTGGAEMA and TEEDSGAGPPRDGDGVPGGRAPGPV. A coiled-coil region spans residues 865–894; sequence HTQEIEENLLSLEVAIRQLEELEEEFCRLR. Ser-905 carries the post-translational modification Phosphoserine.

In terms of assembly, interacts with RHOA, GNA12 and GNA13. Homooligomerizes through the coiled coil region. Interacts with CTNNAL1. May interact with CCPG1. In terms of processing, phosphorylated by PKCA. Angiotensin-2 induced Tyr-737 phosphorylation is mediated by JAK2. Isoform 5 is phosphorylated at 'Ser-390'. Ubiquitously expressed.

The protein resides in the cytoplasm. The protein localises to the membrane. In terms of biological role, seems to play a role in the regulation of RhoA GTPase by guanine nucleotide-binding alpha-12 (GNA12) and alpha-13 (GNA13) subunits. Acts as a GTPase-activating protein (GAP) for GNA12 and GNA13, and as guanine nucleotide exchange factor (GEF) for RhoA GTPase. Activated G alpha 13/GNA13 stimulates the RhoGEF activity through interaction with the RGS-like domain. This GEF activity is inhibited by binding to activated GNA12. Mediates angiotensin-2-induced RhoA activation. Isoform 3 and isoform 4 do not homooligomerize and show an enhanced RhoGEF activity. In lymphoid follicles, may trigger activation of GNA13 as part of S1PR2-dependent signaling pathway that leads to inhibition of germinal center (GC) B cell growth and migration outside the GC niche. The protein is Rho guanine nucleotide exchange factor 1 (Arhgef1) of Mus musculus (Mouse).